The following is a 368-amino-acid chain: Glutaminyl-peptide cyclotransferase (368 aa).

The first 23 residues, 1–23, serve as a signal peptide directing secretion; sequence MAGERRDSKAAAFFCLAWALCLA. N-linked (GlcNAc...) asparagine glycosylation occurs at asparagine 53. Cysteine 143 and cysteine 169 are disulfide-bonded. Residue aspartate 164 coordinates Zn(2+). The active-site Proton acceptor is the glutamate 207. Zn(2+) is bound at residue glutamate 208. The active-site Proton acceptor is the aspartate 254. Asparagine 292 carries an N-linked (GlcNAc...) asparagine glycan. Histidine 336 contributes to the Zn(2+) binding site. N-linked (GlcNAc...) asparagine glycosylation is present at asparagine 352.

Belongs to the glutaminyl-peptide cyclotransferase family. In terms of tissue distribution, expressed by the venom gland.

The protein resides in the secreted. It carries out the reaction N-terminal L-glutaminyl-[peptide] = N-terminal 5-oxo-L-prolyl-[peptide] + NH4(+). Its function is as follows. Responsible for the biosynthesis of pyroglutamyl peptides. Has a bias against acidic and tryptophan residues adjacent to the N-terminal glutaminyl residue and a lack of importance of chain length after the second residue. Also catalyzes N-terminal pyroglutamate formation. The polypeptide is Glutaminyl-peptide cyclotransferase (QPCT) (Boiga dendrophila (Mangrove snake)).